Reading from the N-terminus, the 286-residue chain is Bifunctional protein FolD (286 aa).

NADP(+) is bound by residues 166–168 (GAS) and isoleucine 232.

Belongs to the tetrahydrofolate dehydrogenase/cyclohydrolase family. As to quaternary structure, homodimer.

The enzyme catalyses (6R)-5,10-methylene-5,6,7,8-tetrahydrofolate + NADP(+) = (6R)-5,10-methenyltetrahydrofolate + NADPH. It catalyses the reaction (6R)-5,10-methenyltetrahydrofolate + H2O = (6R)-10-formyltetrahydrofolate + H(+). The protein operates within one-carbon metabolism; tetrahydrofolate interconversion. Its function is as follows. Catalyzes the oxidation of 5,10-methylenetetrahydrofolate to 5,10-methenyltetrahydrofolate and then the hydrolysis of 5,10-methenyltetrahydrofolate to 10-formyltetrahydrofolate. The chain is Bifunctional protein FolD from Marinobacter nauticus (strain ATCC 700491 / DSM 11845 / VT8) (Marinobacter aquaeolei).